We begin with the raw amino-acid sequence, 327 residues long: Biotin synthase (327 aa).

One can recognise a Radical SAM core domain in the interval Asn42–Ser268. 3 residues coordinate [4Fe-4S] cluster: Cys57, Cys61, and Cys64. [2Fe-2S] cluster contacts are provided by Cys102, Cys134, Cys194, and Arg266.

The protein belongs to the radical SAM superfamily. Biotin synthase family. As to quaternary structure, homodimer. The cofactor is [4Fe-4S] cluster. Requires [2Fe-2S] cluster as cofactor.

The enzyme catalyses (4R,5S)-dethiobiotin + (sulfur carrier)-SH + 2 reduced [2Fe-2S]-[ferredoxin] + 2 S-adenosyl-L-methionine = (sulfur carrier)-H + biotin + 2 5'-deoxyadenosine + 2 L-methionine + 2 oxidized [2Fe-2S]-[ferredoxin]. The protein operates within cofactor biosynthesis; biotin biosynthesis; biotin from 7,8-diaminononanoate: step 2/2. Catalyzes the conversion of dethiobiotin (DTB) to biotin by the insertion of a sulfur atom into dethiobiotin via a radical-based mechanism. The polypeptide is Biotin synthase (Rhizobium rhizogenes (strain K84 / ATCC BAA-868) (Agrobacterium radiobacter)).